Here is a 292-residue protein sequence, read N- to C-terminus: Transcription factor-like protein DPA (292 aa).

Residues 1 to 25 (MSMEMELFVTPEKQRQHPSVSVEKT) are disordered. Residues 51–135 (GGGLRQFSVM…KKEIRWKGLP (85 aa)) mediate DNA binding. Positions 101–135 (NEKNIRRRVYDALNVFMALDIIARDKKEIRWKGLP) match the DEF box motif. Residues 163–184 (LKELREKVSSLESLMSRNQEMV) are a coiled coil. The interval 246–280 (QEQNRVSSSSSTHHQSQHSSAHSSSSSCIASGTSG) is disordered. A compositionally biased stretch (low complexity) spans 252–280 (SSSSSTHHQSQHSSAHSSSSSCIASGTSG).

Belongs to the E2F/DP family. As to quaternary structure, heterodimer with E2F. Interacts preferentially with E2FA and E2FB, but also with E2FC. In terms of tissue distribution, strongly expressed in the actively dividing tissues of the shoot apical meristem, young leaf primordia, the vascular tissues of the maturing leaf primordia and axillary buds.

The protein resides in the cytoplasm. It is found in the nucleus. Involved in the regulation of the G1/S transition. Increases the DNA binding and the transactivation activities of E2F proteins after heterodimerization. The complex DPA/E2FA promotes cell division and acts as a regulator of the endocycle. Positively regulates the activity of S phase-specific genes. The protein is Transcription factor-like protein DPA (DPA) of Arabidopsis thaliana (Mouse-ear cress).